The following is a 689-amino-acid chain: Protein CFAP20DC (689 aa).

Disordered stretches follow at residues 241 to 263, 333 to 423, and 584 to 659; these read LKST…NRIE, SKES…GPSE, and ISTS…DLSV. Polar residues-rich tracts occupy residues 251 to 260 and 343 to 359; these read TPSGSSSGNN and EESQ…SSRP. Acidic residues predominate over residues 394–405; that stretch reads SEDDFYGGDSSE. Polar residues predominate over residues 409–421; that stretch reads HSIQGSRGPTTGP. The segment covering 584–593 has biased composition (low complexity); the sequence is ISTSSDDTTT.

The sequence is that of Protein CFAP20DC from Homo sapiens (Human).